We begin with the raw amino-acid sequence, 496 residues long: Lysine--tRNA ligase (496 aa).

Mg(2+) contacts are provided by glutamate 409 and glutamate 416.

Belongs to the class-II aminoacyl-tRNA synthetase family. Homodimer. Mg(2+) serves as cofactor.

Its subcellular location is the cytoplasm. It catalyses the reaction tRNA(Lys) + L-lysine + ATP = L-lysyl-tRNA(Lys) + AMP + diphosphate. The protein is Lysine--tRNA ligase of Streptococcus agalactiae serotype III (strain NEM316).